The primary structure comprises 448 residues: Protein king tubby (448 aa).

Positions 103–195 are disordered; the sequence is HELEDEESSP…NGTGGESEGD (93 aa). A compositionally biased stretch (low complexity) spans 118 to 133; the sequence is QHQQSASHSANSTQSQ. Residue S141 is modified to Phosphoserine. Gly residues predominate over residues 182–191; the sequence is NGTGNGTGGE.

It belongs to the TUB family.

It localises to the cytoplasm. Its subcellular location is the nucleus. It is found in the cell projection. The protein localises to the cilium membrane. The protein resides in the rhabdomere. The protein is Protein king tubby of Drosophila erecta (Fruit fly).